The primary structure comprises 88 residues: Large ribosomal subunit protein bL27 (88 aa).

Residues Met1–Val23 form a disordered region.

The protein belongs to the bacterial ribosomal protein bL27 family.

The sequence is that of Large ribosomal subunit protein bL27 from Methylorubrum populi (strain ATCC BAA-705 / NCIMB 13946 / BJ001) (Methylobacterium populi).